The chain runs to 269 residues: Cytochrome c oxidase subunit 3 (269 aa).

7 helical membrane passes run 13 to 33 (PFHL…LLVL), 46 to 66 (NGHY…SFWF), 90 to 110 (GVIL…WAFF), 138 to 160 (PLLN…HSII), 167 to 187 (ALYG…FQGV), 207 to 227 (FGTG…LVAL), and 245 to 265 (AGIL…ISIY).

It belongs to the cytochrome c oxidase subunit 3 family. Component of the cytochrome c oxidase (complex IV, CIV), a multisubunit enzyme composed of a catalytic core of 3 subunits and several supernumerary subunits. The complex exists as a monomer or a dimer and forms supercomplexes (SCs) in the inner mitochondrial membrane with ubiquinol-cytochrome c oxidoreductase (cytochrome b-c1 complex, complex III, CIII).

The protein resides in the mitochondrion inner membrane. The catalysed reaction is 4 Fe(II)-[cytochrome c] + O2 + 8 H(+)(in) = 4 Fe(III)-[cytochrome c] + 2 H2O + 4 H(+)(out). Its function is as follows. Component of the cytochrome c oxidase, the last enzyme in the mitochondrial electron transport chain which drives oxidative phosphorylation. The respiratory chain contains 3 multisubunit complexes succinate dehydrogenase (complex II, CII), ubiquinol-cytochrome c oxidoreductase (cytochrome b-c1 complex, complex III, CIII) and cytochrome c oxidase (complex IV, CIV), that cooperate to transfer electrons derived from NADH and succinate to molecular oxygen, creating an electrochemical gradient over the inner membrane that drives transmembrane transport and the ATP synthase. Cytochrome c oxidase is the component of the respiratory chain that catalyzes the reduction of oxygen to water. Electrons originating from reduced cytochrome c in the intermembrane space (IMS) are transferred via the dinuclear copper A center (CU(A)) of subunit 2 and heme A of subunit 1 to the active site in subunit 1, a binuclear center (BNC) formed by heme A3 and copper B (CU(B)). The BNC reduces molecular oxygen to 2 water molecules using 4 electrons from cytochrome c in the IMS and 4 protons from the mitochondrial matrix. This chain is Cytochrome c oxidase subunit 3 (COX3), found in Pyricularia grisea (Crabgrass-specific blast fungus).